Here is a 392-residue protein sequence, read N- to C-terminus: S-adenosylmethionine synthase (392 aa).

His20 contacts ATP. Asp22 provides a ligand contact to Mg(2+). A K(+)-binding site is contributed by Glu48. L-methionine-binding residues include Glu61 and Gln106. The interval 106–116 (QSRDIINAIEK) is flexible loop. ATP-binding positions include 171–173 (DSK), Asp248, 254–255 (RK), Ala271, and Lys275. Asp248 lines the L-methionine pocket. Lys279 serves as a coordination point for L-methionine.

It belongs to the AdoMet synthase family. In terms of assembly, homotetramer; dimer of dimers. Mg(2+) is required as a cofactor. K(+) serves as cofactor.

Its subcellular location is the cytoplasm. It catalyses the reaction L-methionine + ATP + H2O = S-adenosyl-L-methionine + phosphate + diphosphate. It functions in the pathway amino-acid biosynthesis; S-adenosyl-L-methionine biosynthesis; S-adenosyl-L-methionine from L-methionine: step 1/1. Catalyzes the formation of S-adenosylmethionine (AdoMet) from methionine and ATP. The overall synthetic reaction is composed of two sequential steps, AdoMet formation and the subsequent tripolyphosphate hydrolysis which occurs prior to release of AdoMet from the enzyme. The chain is S-adenosylmethionine synthase from Borreliella burgdorferi (strain ATCC 35210 / DSM 4680 / CIP 102532 / B31) (Borrelia burgdorferi).